The chain runs to 343 residues: Small ribosomal subunit biogenesis GTPase RsgA (343 aa).

The region spanning 116 to 275 (RGQLKPVAAN…LIDSPGIREF (160 aa)) is the CP-type G domain. Residues 163-166 (NKFD) and 217-225 (GQSGVGKSS) each bind GTP. Positions 299, 304, 306, and 312 each coordinate Zn(2+).

It belongs to the TRAFAC class YlqF/YawG GTPase family. RsgA subfamily. Monomer. Associates with 30S ribosomal subunit, binds 16S rRNA. It depends on Zn(2+) as a cofactor.

Its subcellular location is the cytoplasm. Functionally, one of several proteins that assist in the late maturation steps of the functional core of the 30S ribosomal subunit. Helps release RbfA from mature subunits. May play a role in the assembly of ribosomal proteins into the subunit. Circularly permuted GTPase that catalyzes slow GTP hydrolysis, GTPase activity is stimulated by the 30S ribosomal subunit. This Pseudomonas fluorescens (strain SBW25) protein is Small ribosomal subunit biogenesis GTPase RsgA.